The chain runs to 90 residues: Probable Fe(2+)-trafficking protein (90 aa).

This sequence belongs to the Fe(2+)-trafficking protein family.

Its function is as follows. Could be a mediator in iron transactions between iron acquisition and iron-requiring processes, such as synthesis and/or repair of Fe-S clusters in biosynthetic enzymes. The polypeptide is Probable Fe(2+)-trafficking protein (Saccharophagus degradans (strain 2-40 / ATCC 43961 / DSM 17024)).